We begin with the raw amino-acid sequence, 608 residues long: Glutamine--fructose-6-phosphate aminotransferase [isomerizing] (608 aa).

Catalysis depends on Cys-2, which acts as the Nucleophile; for GATase activity. Residues Cys-2–Asp-218 enclose the Glutamine amidotransferase type-2 domain. 2 SIS domains span residues Met-284–Thr-423 and Met-456–Pro-598. Lys-603 functions as the For Fru-6P isomerization activity in the catalytic mechanism.

Homodimer.

The protein localises to the cytoplasm. It catalyses the reaction D-fructose 6-phosphate + L-glutamine = D-glucosamine 6-phosphate + L-glutamate. Functionally, catalyzes the first step in hexosamine metabolism, converting fructose-6P into glucosamine-6P using glutamine as a nitrogen source. The sequence is that of Glutamine--fructose-6-phosphate aminotransferase [isomerizing] from Gluconobacter oxydans (strain 621H) (Gluconobacter suboxydans).